A 1439-amino-acid chain; its full sequence is MGARASILRGEKLDAWEKIKLRPGGKKHYMLKHLVWANRELEKFALNPDLLDTSAGCKQIIKQLQPALQTGTEELKSLFNTVATLYCVHQKIEIKDTKEALDKIEEEQNESQQKTQQAGAADRGKDSQNYPIVQNMQGQMVHQPISARTLNAWVKVVEEKAFSPEVIPMFTALSEGATPQDLNTMLNTVGGHQAAMQMLKDTINEEAAEWDRLHPVHAGPVAPGQMRDPRGSDIAGTTSTLQEQIAWMTGNPPVPVGDIYKRWIILGLNKIVRMYSPVSILDIKQGPKEPFRDYVDRFFKTLRAEQATQDVKNWMTDTLLVQNANPDCKTILRALGPGASLEEMMTACQGVGGPAHKARVLAEAMSQVNNTTIMMQKSNFKGPKRAIKCFNCGKEGHLARNCRAPRKKGCWKCGKEGHQMKDCTERQANFFRETLAFQQGKAREFPSEQTRANSPTRESQTRANSPTTRELQVRGSNTFSEAGAERQGSLNFPQITLWQRPLVTIKIGGQLKEALLDTGADDTVLEEINLPGKWKPKMIGGIGGFIKVRQYDQIIIEICGKKAIGTVLVGPTPVNIIGRNMLTQLGRTLNFPISPIETVPVKLKPGMDGPKVKQWPLTEEKIKALTAICEEMEQEGKISRIGPENPYNTPVFAIKKKDSTKWRKLVDFRELNKRTQDFWEVQLGIPHPAGLKKKKSVTVLDVGDAYFSVPLDEGFRKYTAFTIPSTNNETPGIRYQYNVLPQGWKGSPPIFQSSMPQILEPFRAPNPEIVIYQYMDDLYVGSDLEIGQHRAPIEELREHLLKWGFTTPDKKHQKEPPFLWMGYELHPDKWTVQPIQLPEKDSWTVNDIQKLVGKLNWASQIYPGIKVRQLCKLLRGAKALTDIVTLTEEAELELAENREILKEPVHGVFYDPSKDLIAEIQKQGNDQWTFQFYQEPFKNLKTGKFAKRGTAHTNDVKQLTAVVQKIALESIVIWGKTPKFRLPIQKETWEAWWTDYWQATWIPEWEFVNTPPLVKLWYQLEKEPIAGVETFYVDGAANRETKIGKAGYVTDRGRQKIVSLTETTNQKTELQAIQLALQDSGSEVNIVTDSQYALGIILAQPDKSESEIVNQIIEQLISKERVYLSWVPAHKGIGGNEQVDKLVSSGIRKVLFLDGIDKAQEEHEKYHSNWRAMANEFNIPPVVPKEIVACCDKCQLKGEAIHGQVNCSPGIWQLDCTHLEGKIILVAVHVASGYIEAEVIPAETGQETAYFLLKLAGRWPVRVIHTDNGSNFTSNAVKAACWWAGIQQEFGIPYNPQSQGVVESMNKELKKIIGQVREQAEHLKTAVQMAVFIHNFKRRGGIGGYSAGERIIDIIASDIQTKELQNQILKIQNFRVYYRDSRDPIWKGPAKLLWKGEGAVVIQDNSDIKVVPRRKAKIIRDYGKQMAGADCVAGRQDED.

A lipid anchor (N-myristoyl glycine; by host) is attached at G2. The tract at residues 7-31 (ILRGEKLDAWEKIKLRPGGKKHYML) is interaction with Gp41. The interaction with host CALM1 stretch occupies residues 8–43 (LRGEKLDAWEKIKLRPGGKKHYMLKHLVWANRELEK). Residues 12–19 (KLDAWEKI) form an interaction with host AP3D1 region. Positions 14–33 (DAWEKIKLRPGGKKHYMLKH) are interaction with membrane phosphatidylinositol 4,5-bisphosphate and RNA. Positions 16 to 22 (WEKIKLR) match the Nuclear export signal motif. A Nuclear localization signal motif is present at residues 26–32 (KKHYMLK). Residues 73–77 (EELKS) form an interaction with membrane phosphatidylinositol 4,5-bisphosphate region. Residues 105–128 (EEEQNESQQKTQQAGAADRGKDSQ) are disordered. Y130 is subject to Phosphotyrosine; by host. The tract at residues 187–225 (NTVGGHQAAMQMLKDTINEEAAEWDRLHPVHAGPVAPGQ) is interaction with human PPIA/CYPA and NUP153. Positions 275–361 (YSPVSILDIK…GGPAHKARVL (87 aa)) are dimerization/Multimerization of capsid protein p24. CCHC-type zinc fingers lie at residues 387–404 (IKCF…NCRA) and 408–425 (KGCW…DCTE). The interval 441–485 (KAREFPSEQTRANSPTRESQTRANSPTTRELQVRGSNTFSEAGAE) is disordered. A compositionally biased stretch (polar residues) spans 447–480 (SEQTRANSPTRESQTRANSPTTRELQVRGSNTFS). The dimerization of protease stretch occupies residues 493-497 (PQITL). Residues 512–581 (KEALLDTGAD…TPVNIIGRNM (70 aa)) form the Peptidase A2 domain. D517 acts as the For protease activity; shared with dimeric partner in catalysis. 2 dimerization of protease regions span residues 541–547 (GIGGFIK) and 580–592 (NMLT…LNFP). A Reverse transcriptase domain is found at 635–825 (EGKISRIGPE…PPFLWMGYEL (191 aa)). Mg(2+) contacts are provided by D701, D776, and D777. The interval 818–826 (FLWMGYELH) is RT 'primer grip'. Residues 989–1005 (WEAWWTDYWQATWIPEW) carry the Tryptophan repeat motif motif. The region spanning 1025–1148 (IAGVETFYVD…VDKLVSSGIR (124 aa)) is the RNase H type-1 domain. Residues D1034, E1069, D1089, and D1140 each contribute to the Mg(2+) site. An Integrase-type zinc finger spans residues 1154 to 1195 (DGIDKAQEEHEKYHSNWRAMANEFNIPPVVPKEIVACCDKCQ). Zn(2+) is bound by residues H1163, H1167, C1191, and C1194. Positions 1205-1355 (VNCSPGIWQL…SAGERIIDII (151 aa)) constitute an Integrase catalytic domain. 3 residues coordinate Mg(2+): D1215, D1267, and E1303. A DNA-binding region (integrase-type) is located at residues 1374–1421 (FRVYYRDSRDPIWKGPAKLLWKGEGAVVIQDNSDIKVVPRRKAKIIRD).

Homotrimer; further assembles as hexamers of trimers. Interacts with gp41 (via C-terminus). Interacts with host CALM1; this interaction induces a conformational change in the Matrix protein, triggering exposure of the myristate group. Interacts with host AP3D1; this interaction allows the polyprotein trafficking to multivesicular bodies during virus assembly. Part of the pre-integration complex (PIC) which is composed of viral genome, matrix protein, Vpr and integrase. In terms of assembly, homodimer; the homodimer further multimerizes as homohexamers or homopentamers. Interacts with human PPIA/CYPA; This interaction stabilizes the capsid. Interacts with human NUP153. Interacts with host PDZD8; this interaction stabilizes the capsid. Interacts with monkey TRIM5; this interaction destabilizes the capsid. As to quaternary structure, homodimer, whose active site consists of two apposed aspartic acid residues. Heterodimer of p66 RT and p51 RT (RT p66/p51). Heterodimerization of RT is essential for DNA polymerase activity. The overall folding of the subdomains is similar in p66 RT and p51 RT but the spatial arrangements of the subdomains are dramatically different. In terms of assembly, homotetramer; may further associate as a homohexadecamer. Part of the pre-integration complex (PIC) which is composed of viral genome, matrix protein, Vpr and integrase. Interacts with human SMARCB1/INI1 and human PSIP1/LEDGF isoform 1. Interacts with human KPNA3; this interaction might play a role in nuclear import of the pre-integration complex. Interacts with human NUP153; this interaction might play a role in nuclear import of the pre-integration complex. The cofactor is Mg(2+). Post-translationally, specific enzymatic cleavages by the viral protease yield mature proteins. The protease is released by autocatalytic cleavage. The polyprotein is cleaved during and after budding, this process is termed maturation. Proteolytic cleavage of p66 RT removes the RNase H domain to yield the p51 RT subunit. Nucleocapsid protein p7 might be further cleaved after virus entry. Tyrosine phosphorylated presumably in the virion by a host kinase. Phosphorylation is apparently not a major regulator of membrane association. In terms of processing, phosphorylated possibly by host MAPK1; this phosphorylation is necessary for Pin1-mediated virion uncoating. Post-translationally, methylated by host PRMT6, impairing its function by reducing RNA annealing and the initiation of reverse transcription.

It localises to the host cell membrane. The protein resides in the host endosome. Its subcellular location is the host multivesicular body. It is found in the virion membrane. The protein localises to the host nucleus. It localises to the host cytoplasm. The protein resides in the virion. It catalyses the reaction Specific for a P1 residue that is hydrophobic, and P1' variable, but often Pro.. The catalysed reaction is Endohydrolysis of RNA in RNA/DNA hybrids. Three different cleavage modes: 1. sequence-specific internal cleavage of RNA. Human immunodeficiency virus type 1 and Moloney murine leukemia virus enzymes prefer to cleave the RNA strand one nucleotide away from the RNA-DNA junction. 2. RNA 5'-end directed cleavage 13-19 nucleotides from the RNA end. 3. DNA 3'-end directed cleavage 15-20 nucleotides away from the primer terminus.. The enzyme catalyses 3'-end directed exonucleolytic cleavage of viral RNA-DNA hybrid.. It carries out the reaction DNA(n) + a 2'-deoxyribonucleoside 5'-triphosphate = DNA(n+1) + diphosphate. Protease: The viral protease is inhibited by many synthetic protease inhibitors (PIs), such as amprenavir, atazanavir, indinavir, loprinavir, nelfinavir, ritonavir and saquinavir. Use of protease inhibitors in tritherapy regimens permit more ambitious therapeutic strategies. Reverse transcriptase/ribonuclease H: RT can be inhibited either by nucleoside RT inhibitors (NRTIs) or by non nucleoside RT inhibitors (NNRTIs). NRTIs act as chain terminators, whereas NNRTIs inhibit DNA polymerization by binding a small hydrophobic pocket near the RT active site and inducing an allosteric change in this region. Classical NRTIs are abacavir, adefovir (PMEA), didanosine (ddI), lamivudine (3TC), stavudine (d4T), tenofovir (PMPA), zalcitabine (ddC), and zidovudine (AZT). Classical NNRTIs are atevirdine (BHAP U-87201E), delavirdine, efavirenz (DMP-266), emivirine (I-EBU), and nevirapine (BI-RG-587). The tritherapies used as a basic effective treatment of AIDS associate two NRTIs and one NNRTI. In terms of biological role, mediates, with Gag polyprotein, the essential events in virion assembly, including binding the plasma membrane, making the protein-protein interactions necessary to create spherical particles, recruiting the viral Env proteins, and packaging the genomic RNA via direct interactions with the RNA packaging sequence (Psi). Gag-Pol polyprotein may regulate its own translation, by the binding genomic RNA in the 5'-UTR. At low concentration, the polyprotein would promote translation, whereas at high concentration, the polyprotein would encapsidate genomic RNA and then shut off translation. Targets the polyprotein to the plasma membrane via a multipartite membrane-binding signal, that includes its myristoylated N-terminus. Matrix protein is part of the pre-integration complex. Implicated in the release from host cell mediated by Vpu. Binds to RNA. Functionally, forms the conical core that encapsulates the genomic RNA-nucleocapsid complex in the virion. Most core are conical, with only 7% tubular. The core is constituted by capsid protein hexamer subunits. The core is disassembled soon after virion entry. Host restriction factors such as TRIM5-alpha or TRIMCyp bind retroviral capsids and cause premature capsid disassembly, leading to blocks in reverse transcription. Capsid restriction by TRIM5 is one of the factors which restricts HIV-1 to the human species. Host PIN1 apparently facilitates the virion uncoating. On the other hand, interactions with PDZD8 or CYPA stabilize the capsid. Its function is as follows. Encapsulates and protects viral dimeric unspliced genomic RNA (gRNA). Binds these RNAs through its zinc fingers. Acts as a nucleic acid chaperone which is involved in rearangement of nucleic acid secondary structure during gRNA retrotranscription. Also facilitates template switch leading to recombination. As part of the polyprotein, participates in gRNA dimerization, packaging, tRNA incorporation and virion assembly. In terms of biological role, aspartyl protease that mediates proteolytic cleavages of Gag and Gag-Pol polyproteins during or shortly after the release of the virion from the plasma membrane. Cleavages take place as an ordered, step-wise cascade to yield mature proteins. This process is called maturation. Displays maximal activity during the budding process just prior to particle release from the cell. Also cleaves Nef and Vif, probably concomitantly with viral structural proteins on maturation of virus particles. Hydrolyzes host EIF4GI and PABP1 in order to shut off the capped cellular mRNA translation. The resulting inhibition of cellular protein synthesis serves to ensure maximal viral gene expression and to evade host immune response. Also mediates cleavage of host YTHDF3. Mediates cleavage of host CARD8, thereby activating the CARD8 inflammasome, leading to the clearance of latent HIV-1 in patient CD4(+) T-cells after viral reactivation; in contrast, HIV-1 can evade CARD8-sensing when its protease remains inactive in infected cells prior to viral budding. Multifunctional enzyme that converts the viral RNA genome into dsDNA in the cytoplasm, shortly after virus entry into the cell. This enzyme displays a DNA polymerase activity that can copy either DNA or RNA templates, and a ribonuclease H (RNase H) activity that cleaves the RNA strand of RNA-DNA heteroduplexes in a partially processive 3' to 5' endonucleasic mode. Conversion of viral genomic RNA into dsDNA requires many steps. A tRNA(3)-Lys binds to the primer-binding site (PBS) situated at the 5'-end of the viral RNA. RT uses the 3' end of the tRNA primer to perform a short round of RNA-dependent minus-strand DNA synthesis. The reading proceeds through the U5 region and ends after the repeated (R) region which is present at both ends of viral RNA. The portion of the RNA-DNA heteroduplex is digested by the RNase H, resulting in a ssDNA product attached to the tRNA primer. This ssDNA/tRNA hybridizes with the identical R region situated at the 3' end of viral RNA. This template exchange, known as minus-strand DNA strong stop transfer, can be either intra- or intermolecular. RT uses the 3' end of this newly synthesized short ssDNA to perform the RNA-dependent minus-strand DNA synthesis of the whole template. RNase H digests the RNA template except for two polypurine tracts (PPTs) situated at the 5'-end and near the center of the genome. It is not clear if both polymerase and RNase H activities are simultaneous. RNase H probably can proceed both in a polymerase-dependent (RNA cut into small fragments by the same RT performing DNA synthesis) and a polymerase-independent mode (cleavage of remaining RNA fragments by free RTs). Secondly, RT performs DNA-directed plus-strand DNA synthesis using the PPTs that have not been removed by RNase H as primers. PPTs and tRNA primers are then removed by RNase H. The 3' and 5' ssDNA PBS regions hybridize to form a circular dsDNA intermediate. Strand displacement synthesis by RT to the PBS and PPT ends produces a blunt ended, linear dsDNA copy of the viral genome that includes long terminal repeats (LTRs) at both ends. Functionally, catalyzes viral DNA integration into the host chromosome, by performing a series of DNA cutting and joining reactions. This enzyme activity takes place after virion entry into a cell and reverse transcription of the RNA genome in dsDNA. The first step in the integration process is 3' processing. This step requires a complex comprising the viral genome, matrix protein, Vpr and integrase. This complex is called the pre-integration complex (PIC). The integrase protein removes 2 nucleotides from each 3' end of the viral DNA, leaving recessed CA OH's at the 3' ends. In the second step, the PIC enters cell nucleus. This process is mediated through integrase and Vpr proteins, and allows the virus to infect a non dividing cell. This ability to enter the nucleus is specific of lentiviruses, other retroviruses cannot and rely on cell division to access cell chromosomes. In the third step, termed strand transfer, the integrase protein joins the previously processed 3' ends to the 5' ends of strands of target cellular DNA at the site of integration. The 5'-ends are produced by integrase-catalyzed staggered cuts, 5 bp apart. A Y-shaped, gapped, recombination intermediate results, with the 5'-ends of the viral DNA strands and the 3' ends of target DNA strands remaining unjoined, flanking a gap of 5 bp. The last step is viral DNA integration into host chromosome. This involves host DNA repair synthesis in which the 5 bp gaps between the unjoined strands are filled in and then ligated. Since this process occurs at both cuts flanking the HIV genome, a 5 bp duplication of host DNA is produced at the ends of HIV-1 integration. Alternatively, Integrase may catalyze the excision of viral DNA just after strand transfer, this is termed disintegration. The chain is Gag-Pol polyprotein (gag-pol) from Human immunodeficiency virus type 1 group M subtype C (isolate ETH2220) (HIV-1).